A 60-amino-acid chain; its full sequence is Large ribosomal subunit protein bL32 (60 aa).

A disordered region spans residues 1–21; sequence MAVPARHTSKAKKNKRRTHYK. The span at 7–20 shows a compositional bias: basic residues; sequence HTSKAKKNKRRTHY.

This sequence belongs to the bacterial ribosomal protein bL32 family.

In Streptococcus equi subsp. zooepidemicus (strain H70), this protein is Large ribosomal subunit protein bL32.